Reading from the N-terminus, the 102-residue chain is Complement inhibitor RaCI6 (102 aa).

A signal peptide spans 1 to 24 (MAALNGLVLLLLTISAMFISECYS). Disulfide bonds link cysteine 37-cysteine 61 and cysteine 42-cysteine 63.

Belongs to the RaCI family. As to expression, expressed in salivary glands.

It is found in the secreted. Its function is as follows. Complement inhibitor. Prevents complement-mediated C5 activation by binding to C5. Binds C5 at a different binding site than the other tick complement inhibitors OmCI and CirpT1, and the drug eculizumab. This Dermacentor andersoni (Rocky mountain wood tick) protein is Complement inhibitor RaCI6.